Consider the following 186-residue polypeptide: Elongation factor P (186 aa).

It belongs to the elongation factor P family.

Its subcellular location is the cytoplasm. It participates in protein biosynthesis; polypeptide chain elongation. In terms of biological role, involved in peptide bond synthesis. Stimulates efficient translation and peptide-bond synthesis on native or reconstituted 70S ribosomes in vitro. Probably functions indirectly by altering the affinity of the ribosome for aminoacyl-tRNA, thus increasing their reactivity as acceptors for peptidyl transferase. The sequence is that of Elongation factor P from Synechococcus sp. (strain RCC307).